A 247-amino-acid polypeptide reads, in one-letter code: Carboxy-S-adenosyl-L-methionine synthase (247 aa).

S-adenosyl-L-methionine is bound by residues Y39, 64–66 (GCS), 89–90 (DN), 117–118 (DI), N132, and R199.

Belongs to the class I-like SAM-binding methyltransferase superfamily. Cx-SAM synthase family. In terms of assembly, homodimer.

It carries out the reaction prephenate + S-adenosyl-L-methionine = carboxy-S-adenosyl-L-methionine + 3-phenylpyruvate + H2O. Catalyzes the conversion of S-adenosyl-L-methionine (SAM) to carboxy-S-adenosyl-L-methionine (Cx-SAM). The protein is Carboxy-S-adenosyl-L-methionine synthase of Salmonella enteritidis PT4 (strain P125109).